Here is a 275-residue protein sequence, read N- to C-terminus: NAD kinase (275 aa).

Residue aspartate 53 is the Proton acceptor of the active site. Residues 53 to 54 (DG), 129 to 130 (NE), arginine 155, aspartate 157, and 168 to 173 (TAYNKS) contribute to the NAD(+) site.

It belongs to the NAD kinase family. It depends on a divalent metal cation as a cofactor.

It is found in the cytoplasm. The catalysed reaction is NAD(+) + ATP = ADP + NADP(+) + H(+). Involved in the regulation of the intracellular balance of NAD and NADP, and is a key enzyme in the biosynthesis of NADP. Catalyzes specifically the phosphorylation on 2'-hydroxyl of the adenosine moiety of NAD to yield NADP. This Streptococcus agalactiae serotype Ia (strain ATCC 27591 / A909 / CDC SS700) protein is NAD kinase.